The primary structure comprises 526 residues: Probable inorganic phosphate transporter 1-3 (526 aa).

Over 1 to 21 the chain is Cytoplasmic; it reads MADGQLKVLTTLDHARTQWYH. Residues 22–42 form a helical membrane-spanning segment; it reads FMAIVIAGMGFFTDAYDLFCI. Residues 43–70 lie on the Extracellular side of the membrane; it reads SLVSKLLGRIYYTDLAGDNPGSLPPNVS. The helical transmembrane segment at 71–91 threads the bilayer; sequence AAVNGVALCGTLAGQLFFGWL. Residues 92 to 99 lie on the Cytoplasmic side of the membrane; sequence GDKLGRKS. A helical membrane pass occupies residues 100 to 120; sequence VYGFTLVLMVVCSVASGLSFG. The Extracellular portion of the chain corresponds to 121–124; the sequence is RTAK. Residues 125-145 traverse the membrane as a helical segment; that stretch reads GVVATLCFFRFWLGFGIGGDY. The Cytoplasmic segment spans residues 146–163; sequence PLSATIMSEYANKRTRGA. A helical transmembrane segment spans residues 164–184; sequence FIAAVFAMQGFGILFGAIVAL. Residues 185–211 are Extracellular-facing; it reads VVSAGFRNAYPAPSYADGRAASLVPEA. Residues 212–232 traverse the membrane as a helical segment; it reads DYVWRIILMFGTVPAALTYYW. Over 233-294 the chain is Cytoplasmic; that stretch reads RMKMPETARY…GLFSRQFVRR (62 aa). Residues 295 to 315 form a helical membrane-spanning segment; sequence HGVHLVATTSTWFLLDIAFYS. At 316 to 349 the chain is on the extracellular side; sequence QNLFQKDIFSKVGWIPPARTMNAVEEVFRIARAQ. Residues 350–370 traverse the membrane as a helical segment; it reads ALIALCGTIPGYWFTVAFIDV. Residues 371–373 lie on the Cytoplasmic side of the membrane; it reads AGR. Residues 374-394 form a helical membrane-spanning segment; that stretch reads FAIQLMGFAMMTVFMLGLAAP. The Extracellular segment spans residues 395–407; that stretch reads YHHWTTPGNHTGF. A helical transmembrane segment spans residues 408–428; that stretch reads VVMYGFTFFFANFGPNATTFI. Over 429–444 the chain is Cytoplasmic; that stretch reads VPAEIYPARLRSTCHG. A helical membrane pass occupies residues 445 to 465; it reads ISAAAGKAGAIVGAFGFLYAA. The Extracellular segment spans residues 466–483; the sequence is QDPHKPEAGYKPGIGIRN. The chain crosses the membrane as a helical span at residues 484–504; the sequence is ALFVLAGTNFLGMLMTLLVPE. The Cytoplasmic portion of the chain corresponds to 505–526; it reads SKGMSLEEVSKENVADDEEATA.

The protein belongs to the major facilitator superfamily. Phosphate:H(+) symporter (TC 2.A.1.9) family. In terms of tissue distribution, expressed at low levels in roots.

The protein localises to the membrane. In terms of biological role, high-affinity transporter for external inorganic phosphate. The sequence is that of Probable inorganic phosphate transporter 1-3 (PHT1-3) from Oryza sativa subsp. japonica (Rice).